A 576-amino-acid chain; its full sequence is Lipoprotein LpqB (576 aa).

The first 16 residues, 1 to 16, serve as a signal peptide directing secretion; the sequence is MRRVTRTIAAAGAAIA. Residue Cys-17 is the site of N-palmitoyl cysteine attachment. Residue Cys-17 is the site of S-diacylglycerol cysteine attachment.

It belongs to the LpqB lipoprotein family.

It is found in the cell membrane. The sequence is that of Lipoprotein LpqB from Bifidobacterium longum (strain NCC 2705).